An 88-amino-acid chain; its full sequence is Beta-defensin 115 (88 aa).

Residues Met1–Ala27 form the signal peptide. 3 cysteine pairs are disulfide-bonded: Cys38/Cys65, Cys45/Cys59, and Cys49/Cys66.

This sequence belongs to the beta-defensin family.

The protein localises to the secreted. Functionally, has antibacterial activity. This is Beta-defensin 115 (DEFB115) from Homo sapiens (Human).